The following is a 345-amino-acid chain: NADPH-dependent oxidoreductase 2-alkenal reductase (345 aa).

Residues 52-53 (PY), 163-169 (AASGAVG), Gly-188, Lys-192, Tyr-208, Asn-232, Cys-254, Tyr-260, 284-286 (FVV), Phe-330, and 334-336 (NVG) contribute to the NADP(+) site. Residue Tyr-53 coordinates substrate. Tyr-260 is a binding site for substrate.

Belongs to the NADP-dependent oxidoreductase L4BD family. Homodimer. In terms of tissue distribution, expressed in leaves.

It is found in the cytoplasm. It localises to the nucleus. Its subcellular location is the nucleoplasm. It carries out the reaction an n-alkanal + NAD(+) = an alk-2-enal + NADH + H(+). The enzyme catalyses an n-alkanal + NADP(+) = an alk-2-enal + NADPH + H(+). Inhibited by N-ethylmaleimide and p-chloromercuribenzoic acid. Its function is as follows. Involved in the detoxification of reactive carbonyls. Acts on lipid peroxide-derived reactive aldehydes. Specific to a double bond activated by an adjacent carbonyl group. Can use both quinones and diamide as substrates, but not menadione, ferricyanide or phylloquinone. Can use 4-hydroxy-(2E)-nonenal (HNE), 4-hydroxy-(2E)-hexenal (HHE), (2E)-nonenal, (2E)-hexenal, (2E)-pentenal, propenal (acrolein), 3-buten-2-one and 3-penten-2-one, but not (R)-(-)-carvone, n-nonanal, n-hexanal, (3Z)-hexanal, cyclohex-2-en-1-one or 12-oxo phytodienoic acid (OPDA) as electron acceptors. Catalyzes the reduction of the alpha,beta-unsaturated bond of 2-alkenals, of lipid peroxide-derived oxenes 9-oxo-10(E),12(Z)-octadecadienoic acid (9-KODE) and 13-oxo-9(Z),11(E)-octadecadienoic acid (13-KODE), as well as 4-oxo-(2E)-nonenal and 4-hydroxynonenal. Can use 12-oxo-10(E) dodecanoate (traumatin), trans-1,3 diphenyl-2-propenone, trans-1,4-diphenyl-2-butene-1,4-dione, 9-oxo-12,13-epoxy-(10E)-octadecenoic acid (trans-EKODE-1b) and 9,13-dihydroxy-10-oxo-11-octadecenoic acid as substrates. Catalyzes the reduction of the 7-8 double bond of phenylpropanal substrates, such as p-coumaryl aldehyde and coniferyl aldehyde (in vitro). Has activity towards toxic substrates, such as 4-hydroxy-(2E)-nonenal (in vitro). May play a distinct role in plant antioxidant defense and is possibly involved in NAD(P)/NAD(P)H homeostasis. This Arabidopsis thaliana (Mouse-ear cress) protein is NADPH-dependent oxidoreductase 2-alkenal reductase.